The following is a 485-amino-acid chain: Glycogen synthase (485 aa).

Lysine 15 contacts ADP-alpha-D-glucose.

It belongs to the glycosyltransferase 1 family. Bacterial/plant glycogen synthase subfamily.

It catalyses the reaction [(1-&gt;4)-alpha-D-glucosyl](n) + ADP-alpha-D-glucose = [(1-&gt;4)-alpha-D-glucosyl](n+1) + ADP + H(+). Its pathway is glycan biosynthesis; glycogen biosynthesis. Synthesizes alpha-1,4-glucan chains using ADP-glucose. This chain is Glycogen synthase, found in Thermosipho africanus (strain TCF52B).